Here is a 265-residue protein sequence, read N- to C-terminus: Type III pantothenate kinase (265 aa).

6–13 (DVGNTHTV) contacts ATP. Residue 112–115 (GADR) participates in substrate binding. The active-site Proton acceptor is the aspartate 114. Aspartate 134 lines the K(+) pocket. Threonine 137 is a binding site for ATP. Threonine 189 is a substrate binding site.

The protein belongs to the type III pantothenate kinase family. Homodimer. NH4(+) serves as cofactor. K(+) is required as a cofactor.

It is found in the cytoplasm. It carries out the reaction (R)-pantothenate + ATP = (R)-4'-phosphopantothenate + ADP + H(+). The protein operates within cofactor biosynthesis; coenzyme A biosynthesis; CoA from (R)-pantothenate: step 1/5. Functionally, catalyzes the phosphorylation of pantothenate (Pan), the first step in CoA biosynthesis. This is Type III pantothenate kinase from Streptomyces griseus subsp. griseus (strain JCM 4626 / CBS 651.72 / NBRC 13350 / KCC S-0626 / ISP 5235).